Consider the following 291-residue polypeptide: Ribosomal RNA small subunit methyltransferase A (291 aa).

Residues H21, L23, G48, E70, D95, and N115 each coordinate S-adenosyl-L-methionine.

The protein belongs to the class I-like SAM-binding methyltransferase superfamily. rRNA adenine N(6)-methyltransferase family. RsmA subfamily.

It localises to the cytoplasm. The catalysed reaction is adenosine(1518)/adenosine(1519) in 16S rRNA + 4 S-adenosyl-L-methionine = N(6)-dimethyladenosine(1518)/N(6)-dimethyladenosine(1519) in 16S rRNA + 4 S-adenosyl-L-homocysteine + 4 H(+). Functionally, specifically dimethylates two adjacent adenosines (A1518 and A1519) in the loop of a conserved hairpin near the 3'-end of 16S rRNA in the 30S particle. May play a critical role in biogenesis of 30S subunits. The protein is Ribosomal RNA small subunit methyltransferase A of Prochlorococcus marinus (strain NATL2A).